Reading from the N-terminus, the 171-residue chain is HTH-type transcriptional regulator AldR (171 aa).

Residues 1 to 14 (MSEGSSITGVQTPG) show a composition bias toward polar residues. The disordered stretch occupies residues 1–21 (MSEGSSITGVQTPGSPKDVRA). The HTH asnC-type domain maps to 24–85 (LDDIDRRILL…DIDPAAVGLG (62 aa)). Residues 43 to 62 (NSALAEMVGIAPSTCHGRVR) constitute a DNA-binding region (H-T-H motif).

Homodimer in the absence of L-alanine. Homooctamer in the presence of L-alanine. Homotetramers in the presence of L-cysteine.

In the presence of alanine, AldR changes its quaternary structure from a homodimer to an octamer with an open-ring conformation. The binding affinity of AldR for the ald control region is increased significantly by L-alanine. In vitro, L-cysteine also increases the binding affinity of AldR for the target DNA. Functionally, transcriptional regulator that might play a role under hypoxic conditions. Regulates the expression of ald, which encodes L-alanine dehydrogenase. Serves as both an activator for ald expression in the presence of L-alanine and a repressor in the absence of L-alanine. Acts by binding directly to the upstream region of the ald gene. Four AldR-binding sites (O2, O1, O4 and O3) were identified upstream of the ald gene. O2, O1 and O4 are required for the induction of ald expression by alanine, while O3 is directly involved in the repression of ald expression, by occluding the access of RNA polymerase to the ald promoter. In addition to O3, both O1 and O4 are also necessary for full repression of ald expression in the absence of alanine. This is HTH-type transcriptional regulator AldR from Mycolicibacterium smegmatis (strain ATCC 700084 / mc(2)155) (Mycobacterium smegmatis).